Consider the following 1588-residue polypeptide: Multicopy suppressor of chk1 protein 1 (1588 aa).

The segment at 38 to 60 (HAKPSTQQQQQQQNISNETTSTG) is disordered. The segment covering 51-60 (NISNETTSTG) has biased composition (polar residues). The 43-residue stretch at 82-124 (NVRVTPKKEEFSRGLDFISDLYDQTARKSGAVRVIPPDNWKCP) folds into the JmjN domain. A PHD-type 1 zinc finger spans residues 298 to 345 (KCKLCAQEGSSLVTCCICQSNYHYACVEAPFAPFSDIHYWTCNSCIPS). The segment covering 385–395 (PLTLPSNTKTP) has biased composition (polar residues). Residues 385-412 (PLTLPSNTKTPPASARQSSRRTRSTSGK) form a disordered region. A JmjC domain is found at 475 to 645 (FPTSRQNAYY…DMHAENSFNM (171 aa)). Residues 848–872 (EKRKPKRGSATHSHLESPSEEVEDL) are disordered. The PHD-type 2 zinc-finger motif lies at 1171–1220 (FHYCFCRQPEAGMMIECELCHEWYHAKCMKMSKKKLRADEKFICPICDYR). Positions 1319–1341 (APQPPPFIGESRSNRKPRPTKRQ) are disordered. A PHD-type 3 zinc finger spans residues 1454–1505 (SVICLCRQPFAISDGTVQCHNCLEWFHYECVGLSSDIVSTLSNYACPDCCSK).

It is found in the nucleus. Has a role in regulating chromatin structure via global deacetylation of histone H3. This function is associated with the activity of a histone deacetylase. The protein is Multicopy suppressor of chk1 protein 1 (msc1) of Schizosaccharomyces pombe (strain 972 / ATCC 24843) (Fission yeast).